A 221-amino-acid chain; its full sequence is Small ribosomal subunit protein uS2 (221 aa).

The protein belongs to the universal ribosomal protein uS2 family.

The sequence is that of Small ribosomal subunit protein uS2 from Methanococcus maripaludis (strain C6 / ATCC BAA-1332).